The following is a 354-amino-acid chain: Chorismate synthase (354 aa).

Residue arginine 48 participates in NADP(+) binding. Residues 125-127, glycine 277, 292-296, and arginine 318 each bind FMN; these read RAS and KPIPS.

The protein belongs to the chorismate synthase family. As to quaternary structure, homotetramer. FMNH2 is required as a cofactor.

It carries out the reaction 5-O-(1-carboxyvinyl)-3-phosphoshikimate = chorismate + phosphate. It participates in metabolic intermediate biosynthesis; chorismate biosynthesis; chorismate from D-erythrose 4-phosphate and phosphoenolpyruvate: step 7/7. In terms of biological role, catalyzes the anti-1,4-elimination of the C-3 phosphate and the C-6 proR hydrogen from 5-enolpyruvylshikimate-3-phosphate (EPSP) to yield chorismate, which is the branch point compound that serves as the starting substrate for the three terminal pathways of aromatic amino acid biosynthesis. This reaction introduces a second double bond into the aromatic ring system. The protein is Chorismate synthase of Nitratidesulfovibrio vulgaris (strain DP4) (Desulfovibrio vulgaris).